Reading from the N-terminus, the 464-residue chain is MLATDSDPIVAIATAAGRGGIGVVRVSFGRGGEAAALPLIDALCGQRLAPRHASYVPFVDEHGAPLDRGIALYFPAPHSYTGEHVLELQGHGGPIVMQLLLQRCLDAGRGFGLRLAQPGEFTRRAFLNDKLDLAQAEAVADLIEASTEAAARSAGRSLDGAFSRQIHALVEDVITLRMLVEATLDFPEEEIDFLEAADARGKLAKIREQLAHVLGDARQGALLREGLSVVLAGQPNVGKSSLLNALAGAELAIVTPIAGTTRDKVAQTIQVEGIPLHIIDTAGLRETEDEVERIGIARTWSEIERADVVLHLLDSRTGMTADDEVIAARFPGGVPVVRVLNKTDLTGVPACVEHPAAAGDLTEVHLSAKRGDGIDMLRAELLRIAGWQAGAEGVYLARERHLIALRAAQEHLAQAADHAEQRAQSLDLFAEELRLAQEQLNAITGEFTSDDLLGVIFSRFCIGK.

Residues Arg-25, Glu-87, and Lys-130 each coordinate (6S)-5-formyl-5,6,7,8-tetrahydrofolate. Positions 226–386 constitute a TrmE-type G domain; the sequence is GLSVVLAGQP…LRAELLRIAG (161 aa). K(+) is bound at residue Asn-236. Residues 236–241, 255–261, and 280–283 each bind GTP; these read NVGKSS, TPIAGTT, and DTAG. Ser-240 contributes to the Mg(2+) binding site. Thr-255, Ile-257, and Thr-260 together coordinate K(+). Thr-261 provides a ligand contact to Mg(2+). Lys-464 contacts (6S)-5-formyl-5,6,7,8-tetrahydrofolate.

Belongs to the TRAFAC class TrmE-Era-EngA-EngB-Septin-like GTPase superfamily. TrmE GTPase family. Homodimer. Heterotetramer of two MnmE and two MnmG subunits. It depends on K(+) as a cofactor.

The protein localises to the cytoplasm. In terms of biological role, exhibits a very high intrinsic GTPase hydrolysis rate. Involved in the addition of a carboxymethylaminomethyl (cmnm) group at the wobble position (U34) of certain tRNAs, forming tRNA-cmnm(5)s(2)U34. This chain is tRNA modification GTPase MnmE, found in Burkholderia ambifaria (strain ATCC BAA-244 / DSM 16087 / CCUG 44356 / LMG 19182 / AMMD) (Burkholderia cepacia (strain AMMD)).